Reading from the N-terminus, the 368-residue chain is Queuine tRNA-ribosyltransferase (368 aa).

Catalysis depends on Asp-89, which acts as the Proton acceptor. Substrate contacts are provided by residues 89-93 (DSGGF), Asp-143, and Gly-216. The interval 247–253 (GVGKPED) is RNA binding. Catalysis depends on Asp-266, which acts as the Nucleophile. An RNA binding; important for wobble base 34 recognition region spans residues 271–275 (TRNAR). Zn(2+)-binding residues include Cys-304, Cys-306, Cys-309, and His-335.

It belongs to the queuine tRNA-ribosyltransferase family. Homodimer. Within each dimer, one monomer is responsible for RNA recognition and catalysis, while the other monomer binds to the replacement base PreQ1. Zn(2+) serves as cofactor.

It carries out the reaction 7-aminomethyl-7-carbaguanine + guanosine(34) in tRNA = 7-aminomethyl-7-carbaguanosine(34) in tRNA + guanine. It functions in the pathway tRNA modification; tRNA-queuosine biosynthesis. Functionally, catalyzes the base-exchange of a guanine (G) residue with the queuine precursor 7-aminomethyl-7-deazaguanine (PreQ1) at position 34 (anticodon wobble position) in tRNAs with GU(N) anticodons (tRNA-Asp, -Asn, -His and -Tyr). Catalysis occurs through a double-displacement mechanism. The nucleophile active site attacks the C1' of nucleotide 34 to detach the guanine base from the RNA, forming a covalent enzyme-RNA intermediate. The proton acceptor active site deprotonates the incoming PreQ1, allowing a nucleophilic attack on the C1' of the ribose to form the product. After dissociation, two additional enzymatic reactions on the tRNA convert PreQ1 to queuine (Q), resulting in the hypermodified nucleoside queuosine (7-(((4,5-cis-dihydroxy-2-cyclopenten-1-yl)amino)methyl)-7-deazaguanosine). This is Queuine tRNA-ribosyltransferase from Buchnera aphidicola subsp. Schizaphis graminum (strain Sg).